Here is a 172-residue protein sequence, read N- to C-terminus: SsrA-binding protein (172 aa).

The protein belongs to the SmpB family.

The protein localises to the cytoplasm. Its function is as follows. Required for rescue of stalled ribosomes mediated by trans-translation. Binds to transfer-messenger RNA (tmRNA), required for stable association of tmRNA with ribosomes. tmRNA and SmpB together mimic tRNA shape, replacing the anticodon stem-loop with SmpB. tmRNA is encoded by the ssrA gene; the 2 termini fold to resemble tRNA(Ala) and it encodes a 'tag peptide', a short internal open reading frame. During trans-translation Ala-aminoacylated tmRNA acts like a tRNA, entering the A-site of stalled ribosomes, displacing the stalled mRNA. The ribosome then switches to translate the ORF on the tmRNA; the nascent peptide is terminated with the 'tag peptide' encoded by the tmRNA and targeted for degradation. The ribosome is freed to recommence translation, which seems to be the essential function of trans-translation. The protein is SsrA-binding protein of Dehalococcoides mccartyi (strain CBDB1).